The following is a 718-amino-acid chain: Methionine--tRNA ligase (718 aa).

Residues 27-37 (PYANGQIHIGH) carry the 'HIGH' region motif. Residues Cys-158, Cys-161, Cys-171, and Cys-174 each coordinate Zn(2+). The short motif at 348–352 (KMSKS) is the 'KMSKS' region element. Lys-351 lines the ATP pocket. The tRNA-binding domain maps to 612–718 (DFAKIDLRIA…SGAKPGMRVK (107 aa)).

This sequence belongs to the class-I aminoacyl-tRNA synthetase family. MetG type 1 subfamily. As to quaternary structure, homodimer. Requires Zn(2+) as cofactor.

It localises to the cytoplasm. It catalyses the reaction tRNA(Met) + L-methionine + ATP = L-methionyl-tRNA(Met) + AMP + diphosphate. Its function is as follows. Is required not only for elongation of protein synthesis but also for the initiation of all mRNA translation through initiator tRNA(fMet) aminoacylation. This is Methionine--tRNA ligase from Burkholderia thailandensis (strain ATCC 700388 / DSM 13276 / CCUG 48851 / CIP 106301 / E264).